A 695-amino-acid polypeptide reads, in one-letter code: MALLLVSLLAFLSLGSGCHHRICHCSNRVFLCQESKVTEIPSDLPRNAIELRFVLTKLRVIQKGAFSGFGDLEKIEISQNDVLEVIEADVFSNLPKLHEIRIEKANNLLYINPEAFQNLPNLQYLLISNTGIKHLPDVHKIHSLQKVLLDIQDNINIHTIERNSFVGLSFESVILWLNKNGIQEIHNCAFNGTQLDELNLSDNNNLEELPNDVFHGASGPVILDISRTRIHSLPSYGLENLKKLRARSTYNLKKLPTLEKLVALMEASLTYPSHCCAFANWRRQISELHPICNKSILRQEVDYMTQARGQRSSLAEDNESSYSRGFDMTYTEFDYDLCNEVVDVTCSPKPDAFNPCEDIMGYNILRVLIWFISILAITGNIIVLVILTTSQYKLTVPRFLMCNLAFADLCIGIYLLLIASVDIHTKSQYHNYAIDWQTGAGCDAAGFFTVFASELSVYTLTAITLERWHTITHAMQLDCKVQLRHAASVMVMGWIFAFAAALFPIFGISSYMKVSICLPMDIDSPLSQLYVMSLLVLNVLAFVVICGCYIHIYLTVRNPNIVSSSSDTRIAKRMAMLIFTDFLCMAPISFFAISASLKVPLITVSKAKILLVLFHPINSCANPFLYAIFTKNFRRDFFILLSKCGCYEMQAQIYRTETSSTVHNTHPRNGHCSSAPRVTSGSTYILVPLSHLAQN.

An N-terminal signal peptide occupies residues 1-17; the sequence is MALLLVSLLAFLSLGSG. 2 disulfide bridges follow: C18–C25 and C23–C32. The region spanning 18–46 is the LRRNT domain; sequence CHHRICHCSNRVFLCQESKVTEIPSDLPR. Residues 18–366 lie on the Extracellular side of the membrane; the sequence is CHHRICHCSN…EDIMGYNILR (349 aa). 9 LRR repeats span residues 49-72, 73-97, 98-118, 119-143, 144-169, 170-192, 193-216, 217-240, and 241-259; these read IELR…FGDL, EKIE…LPKL, HEIR…AFQN, LPNL…KIHS, LQKV…VGLS, FESV…AFNG, TQLD…VFHG, ASGP…GLEN, and LKKL…PTLE. N-linked (GlcNAc...) asparagine glycans are attached at residues N191 and N199. Intrachain disulfides connect C275–C346, C276–C292, C276–C356, and C292–C338. N-linked (GlcNAc...) asparagine glycans are attached at residues N293 and N318. Residue Y335 is modified to Sulfotyrosine. Residues 367–387 traverse the membrane as a helical segment; sequence VLIWFISILAITGNIIVLVIL. Residues 388–398 lie on the Cytoplasmic side of the membrane; sequence TTSQYKLTVPR. The helical transmembrane segment at 399-421 threads the bilayer; that stretch reads FLMCNLAFADLCIGIYLLLIASV. At 422-443 the chain is on the extracellular side; sequence DIHTKSQYHNYAIDWQTGAGCD. C442 and C517 are disulfide-bonded. The helical transmembrane segment at 444–465 threads the bilayer; the sequence is AAGFFTVFASELSVYTLTAITL. The Cytoplasmic segment spans residues 466–485; it reads ERWHTITHAMQLDCKVQLRH. A helical transmembrane segment spans residues 486–508; that stretch reads AASVMVMGWIFAFAAALFPIFGI. Over 509-528 the chain is Extracellular; sequence SSYMKVSICLPMDIDSPLSQ. Residues 529-550 form a helical membrane-spanning segment; that stretch reads LYVMSLLVLNVLAFVVICGCYI. The Cytoplasmic segment spans residues 551–573; it reads HIYLTVRNPNIVSSSSDTRIAKR. A helical transmembrane segment spans residues 574 to 597; that stretch reads MAMLIFTDFLCMAPISFFAISASL. Residues 598–608 are Extracellular-facing; sequence KVPLITVSKAK. Residues 609 to 630 traverse the membrane as a helical segment; the sequence is ILLVLFHPINSCANPFLYAIFT. At 631 to 695 the chain is on the cytoplasmic side; sequence KNFRRDFFIL…LVPLSHLAQN (65 aa).

Belongs to the G-protein coupled receptor 1 family. FSH/LSH/TSH subfamily. In terms of assembly, homotrimer. Functions as a homotrimer binding the FSH hormone heterodimer composed of CGA and FSHB. Interacts with ARRB2. Interacts with APPL2; interaction is independent of follicle stimulating hormone stimulation. Sulfated. Post-translationally, N-glycosylated; indirectly required for FSH-binding, possibly via a conformational change that allows high affinity binding of hormone. In terms of tissue distribution, sertoli cells and ovarian granulosa cells.

Its subcellular location is the cell membrane. Its function is as follows. G protein-coupled receptor for follitropin, the follicle-stimulating hormone. Through cAMP production activates the downstream PI3K-AKT and ERK1/ERK2 signaling pathways. This Homo sapiens (Human) protein is Follicle-stimulating hormone receptor (FSHR).